The following is a 485-amino-acid chain: Cytochrome P450 monooxygenase tndB (485 aa).

The helical transmembrane segment at 20-40 (VYGISAVIAVGLAIYSASLAI) threads the bilayer. Cysteine 481 contacts heme.

It belongs to the cytochrome P450 family. It depends on heme as a cofactor.

Its subcellular location is the membrane. It participates in secondary metabolite biosynthesis; terpenoid biosynthesis. Its function is as follows. Cytochrome P450 monooxygenase; part of the gene cluster that mediates the biosynthesis of talaronoid C, a fusicoccane diterpenoid with an unprecedented tricyclic 5/8/6 ring system. The first step in the pathway is performed by the fusicoccadiene synthase tndC that possesses both prenyl transferase and terpene cyclase activity, converting isopentenyl diphosphate and dimethylallyl diphosphate into geranylgeranyl diphosphate (GGDP) and further converting GGDP into talarodiene, a precursor for talaronoid C. The remaining enzymes from the cluster include the cytochrome P450 monooxygenase tndB, the aldehyde reductase tndE and the alcohol dehydrogenase tndF that are involved in the conversion of talarodiene into talaronoid C. The chain is Cytochrome P450 monooxygenase tndB from Aspergillus flavipes.